The following is a 201-amino-acid chain: tRNA (guanine-N(7)-)-methyltransferase (201 aa).

Positions 33, 58, 85, and 106 each coordinate S-adenosyl-L-methionine. The active site involves aspartate 106. Substrate is bound by residues lysine 110, aspartate 142, and threonine 180–glutamate 183.

The protein belongs to the class I-like SAM-binding methyltransferase superfamily. TrmB family.

It catalyses the reaction guanosine(46) in tRNA + S-adenosyl-L-methionine = N(7)-methylguanosine(46) in tRNA + S-adenosyl-L-homocysteine. Its pathway is tRNA modification; N(7)-methylguanine-tRNA biosynthesis. Functionally, catalyzes the formation of N(7)-methylguanine at position 46 (m7G46) in tRNA. The chain is tRNA (guanine-N(7)-)-methyltransferase from Mesomycoplasma hyopneumoniae (strain J / ATCC 25934 / NCTC 10110) (Mycoplasma hyopneumoniae).